Reading from the N-terminus, the 264-residue chain is S-adenosylmethionine decarboxylase proenzyme (264 aa).

S112 serves as the catalytic Schiff-base intermediate with substrate; via pyruvic acid. A Pyruvic acid (Ser); by autocatalysis modification is found at S112. H117 (proton acceptor; for processing activity) is an active-site residue. Catalysis depends on C140, which acts as the Proton donor; for catalytic activity.

Belongs to the prokaryotic AdoMetDC family. Type 2 subfamily. In terms of assembly, heterooctamer of four alpha and four beta chains arranged as a tetramer of alpha/beta heterodimers. The cofactor is pyruvate. In terms of processing, is synthesized initially as an inactive proenzyme. Formation of the active enzyme involves a self-maturation process in which the active site pyruvoyl group is generated from an internal serine residue via an autocatalytic post-translational modification. Two non-identical subunits are generated from the proenzyme in this reaction, and the pyruvate is formed at the N-terminus of the alpha chain, which is derived from the carboxyl end of the proenzyme. The post-translation cleavage follows an unusual pathway, termed non-hydrolytic serinolysis, in which the side chain hydroxyl group of the serine supplies its oxygen atom to form the C-terminus of the beta chain, while the remainder of the serine residue undergoes an oxidative deamination to produce ammonia and the pyruvoyl group blocking the N-terminus of the alpha chain.

It carries out the reaction S-adenosyl-L-methionine + H(+) = S-adenosyl 3-(methylsulfanyl)propylamine + CO2. The protein operates within amine and polyamine biosynthesis; S-adenosylmethioninamine biosynthesis; S-adenosylmethioninamine from S-adenosyl-L-methionine: step 1/1. Its function is as follows. Catalyzes the decarboxylation of S-adenosylmethionine to S-adenosylmethioninamine (dcAdoMet), the propylamine donor required for the synthesis of the polyamines spermine and spermidine from the diamine putrescine. This is S-adenosylmethionine decarboxylase proenzyme from Cronobacter sakazakii (strain ATCC BAA-894) (Enterobacter sakazakii).